The sequence spans 172 residues: Large ribosomal subunit protein uL16 (172 aa).

This sequence belongs to the universal ribosomal protein uL16 family.

In Methanocella arvoryzae (strain DSM 22066 / NBRC 105507 / MRE50), this protein is Large ribosomal subunit protein uL16.